The following is an 88-amino-acid chain: Cell division topological specificity factor (88 aa).

It belongs to the MinE family.

Functionally, prevents the cell division inhibition by proteins MinC and MinD at internal division sites while permitting inhibition at polar sites. This ensures cell division at the proper site by restricting the formation of a division septum at the midpoint of the long axis of the cell. The protein is Cell division topological specificity factor of Herminiimonas arsenicoxydans.